A 314-amino-acid polypeptide reads, in one-letter code: Caspase-like protein (314 aa).

It belongs to the peptidase C14A family.

Functionally, may be involved in viral replication. This is Caspase-like protein from Heliothis virescens ascovirus 3e (HvAV-3e).